Reading from the N-terminus, the 348-residue chain is Acetylesterase (348 aa).

A signal peptide spans 1-16; it reads MRSILVIPSFVAVLNA. N-linked (GlcNAc...) asparagine glycosylation is found at N64, N165, N218, N223, and N297.

This sequence belongs to the carbohydrate esterase CE16 family. Post-translationally, N-glycosylated.

The protein localises to the secreted. The enzyme catalyses an acetyl ester + H2O = an aliphatic alcohol + acetate + H(+). In terms of biological role, acetylesterase that acts as an exo-deacetylase. Shows activity towards naphtyl acetate, triacetin, as well as towards glucose- and xylose acetates. Liberates acetic acid from xylo-oligomers. This Hypocrea jecorina (Trichoderma reesei) protein is Acetylesterase.